A 41-amino-acid chain; its full sequence is M-factor (41 aa).

The segment at 1 to 25 is disordered; the sequence is MDSMANTVSSSVVNTGNKPSETLNK. A propeptide spanning residues 1–29 is cleaved from the precursor; that stretch reads MDSMANTVSSSVVNTGNKPSETLNKTVKN. Cysteine methyl ester is present on Cys38. Cys38 carries S-farnesyl cysteine lipidation. The propeptide at 39-41 is removed in mature form; that stretch reads VIA.

The protein localises to the secreted. In terms of biological role, M-factor is a mating pheromone produced by M-type mating cells. All three mfm genes contribute to the production of M-factor. The polypeptide is M-factor (mfm3) (Schizosaccharomyces pombe (strain 972 / ATCC 24843) (Fission yeast)).